A 253-amino-acid chain; its full sequence is HTH-type transcriptional repressor DasR (253 aa).

An HTH gntR-type domain is found at 16-86; that stretch reads RAQRVPKYYR…QGKGTFVAKP (71 aa). Residues 46 to 65 constitute a DNA-binding region (H-T-H motif); sequence ERTLAAEFDTSRTTVPQALQ.

The protein resides in the cytoplasm. Global regulator that is part of the nutrient-sensing system. In the absence of glucosamine 6-P (GlcN6P), represses the phosphotransferase system (PTS) specific for the uptake of N-acetylglucosamine (PTSNag), and genes involved in the metabolism of chitin, as well as several genes involved in development, thereby linking carbon availability to morphogenesis. Regulates the dasABC transport operon involved in glucose-related morphogenesis. Essential for development. This chain is HTH-type transcriptional repressor DasR (dasR), found in Streptomyces griseus.